The sequence spans 542 residues: Probable myosin-binding protein 6 (542 aa).

The signal sequence occupies residues 1-21 (MYIQLLCFFLFLFLLLQATMS). A helical transmembrane segment spans residues 39-59 (FLIYTVLEWSLIVFLFIDGVI). The disordered stretch occupies residues 219 to 239 (SFLAPAPSPRVSHNKLSENES). The GTD-binding domain maps to 300–398 (SILNQLKKEV…ELEAEFEVYR (99 aa)). The disordered stretch occupies residues 419 to 480 (GNASAYDDCQ…DEEKGSESKE (62 aa)). A compositionally biased stretch (polar residues) spans 437-456 (AVSSSNQQENGENIDQNGQS). Positions 471–480 (DEEKGSESKE) are enriched in basic and acidic residues.

It localises to the membrane. Probable membrane-anchored myosin receptors. The chain is Probable myosin-binding protein 6 from Arabidopsis thaliana (Mouse-ear cress).